We begin with the raw amino-acid sequence, 234 residues long: Small ribosomal subunit protein uS2 (234 aa).

The protein belongs to the universal ribosomal protein uS2 family.

In Prochlorococcus marinus (strain MIT 9515), this protein is Small ribosomal subunit protein uS2.